The following is a 153-amino-acid chain: Phosphopantetheine adenylyltransferase (153 aa).

Position 11 (Ser11) interacts with substrate. ATP contacts are provided by residues 11–12 (SF) and His19. The substrate site is built by Lys43, Thr75, and Arg89. ATP-binding positions include 90-92 (GIR), Glu100, and 124-130 (LSFISSS).

It belongs to the bacterial CoaD family. Homohexamer. The cofactor is Mg(2+).

The protein localises to the cytoplasm. The catalysed reaction is (R)-4'-phosphopantetheine + ATP + H(+) = 3'-dephospho-CoA + diphosphate. The protein operates within cofactor biosynthesis; coenzyme A biosynthesis; CoA from (R)-pantothenate: step 4/5. Functionally, reversibly transfers an adenylyl group from ATP to 4'-phosphopantetheine, yielding dephospho-CoA (dPCoA) and pyrophosphate. The polypeptide is Phosphopantetheine adenylyltransferase (Porphyromonas gingivalis (strain ATCC 33277 / DSM 20709 / CIP 103683 / JCM 12257 / NCTC 11834 / 2561)).